The sequence spans 433 residues: 3-phosphoshikimate 1-carboxyvinyltransferase (433 aa).

3-phosphoshikimate contacts are provided by K22, S23, and R27. Residue K22 participates in phosphoenolpyruvate binding. Residues G94 and R123 each contribute to the phosphoenolpyruvate site. 4 residues coordinate 3-phosphoshikimate: S168, Q170, D319, and K346. Residue Q170 coordinates phosphoenolpyruvate. The active-site Proton acceptor is the D319. Phosphoenolpyruvate is bound by residues R350 and R392.

The protein belongs to the EPSP synthase family. Monomer.

It localises to the cytoplasm. It carries out the reaction 3-phosphoshikimate + phosphoenolpyruvate = 5-O-(1-carboxyvinyl)-3-phosphoshikimate + phosphate. Its pathway is metabolic intermediate biosynthesis; chorismate biosynthesis; chorismate from D-erythrose 4-phosphate and phosphoenolpyruvate: step 6/7. Its function is as follows. Catalyzes the transfer of the enolpyruvyl moiety of phosphoenolpyruvate (PEP) to the 5-hydroxyl of shikimate-3-phosphate (S3P) to produce enolpyruvyl shikimate-3-phosphate and inorganic phosphate. The sequence is that of 3-phosphoshikimate 1-carboxyvinyltransferase from Roseiflexus sp. (strain RS-1).